Reading from the N-terminus, the 308-residue chain is Glycine--tRNA ligase alpha subunit (308 aa).

It belongs to the class-II aminoacyl-tRNA synthetase family. Tetramer of two alpha and two beta subunits.

It is found in the cytoplasm. The enzyme catalyses tRNA(Gly) + glycine + ATP = glycyl-tRNA(Gly) + AMP + diphosphate. This is Glycine--tRNA ligase alpha subunit from Brucella canis (strain ATCC 23365 / NCTC 10854 / RM-666).